A 70-amino-acid polypeptide reads, in one-letter code: DNA-directed RNA polymerase subunit omega (70 aa).

This sequence belongs to the RNA polymerase subunit omega family. As to quaternary structure, the RNAP catalytic core consists of 2 alpha, 1 beta, 1 beta' and 1 omega subunit. When a sigma factor is associated with the core the holoenzyme is formed, which can initiate transcription.

It carries out the reaction RNA(n) + a ribonucleoside 5'-triphosphate = RNA(n+1) + diphosphate. In terms of biological role, promotes RNA polymerase assembly. Latches the N- and C-terminal regions of the beta' subunit thereby facilitating its interaction with the beta and alpha subunits. This is DNA-directed RNA polymerase subunit omega from Bacillus mycoides (strain KBAB4) (Bacillus weihenstephanensis).